A 183-amino-acid polypeptide reads, in one-letter code: Holliday junction branch migration complex subunit RuvA (183 aa).

Residues Met1–Leu63 form a domain I region. Residues Glu64–Ala139 are domain II. Ala139 is a region of interest (flexible linker). The domain III stretch occupies residues Ala139–Ser183.

It belongs to the RuvA family. In terms of assembly, homotetramer. Forms an RuvA(8)-RuvB(12)-Holliday junction (HJ) complex. HJ DNA is sandwiched between 2 RuvA tetramers; dsDNA enters through RuvA and exits via RuvB. An RuvB hexamer assembles on each DNA strand where it exits the tetramer. Each RuvB hexamer is contacted by two RuvA subunits (via domain III) on 2 adjacent RuvB subunits; this complex drives branch migration. In the full resolvosome a probable DNA-RuvA(4)-RuvB(12)-RuvC(2) complex forms which resolves the HJ.

Its subcellular location is the cytoplasm. Its function is as follows. The RuvA-RuvB-RuvC complex processes Holliday junction (HJ) DNA during genetic recombination and DNA repair, while the RuvA-RuvB complex plays an important role in the rescue of blocked DNA replication forks via replication fork reversal (RFR). RuvA specifically binds to HJ cruciform DNA, conferring on it an open structure. The RuvB hexamer acts as an ATP-dependent pump, pulling dsDNA into and through the RuvAB complex. HJ branch migration allows RuvC to scan DNA until it finds its consensus sequence, where it cleaves and resolves the cruciform DNA. This chain is Holliday junction branch migration complex subunit RuvA, found in Helicobacter pylori (strain J99 / ATCC 700824) (Campylobacter pylori J99).